The following is a 140-amino-acid chain: Nucleoside diphosphate kinase (140 aa).

Residues Lys-11, Phe-59, Arg-87, Thr-93, Arg-104, and Asn-114 each coordinate ATP. His-117 functions as the Pros-phosphohistidine intermediate in the catalytic mechanism.

The protein belongs to the NDK family. Homotetramer. Mg(2+) is required as a cofactor.

Its subcellular location is the cytoplasm. It catalyses the reaction a 2'-deoxyribonucleoside 5'-diphosphate + ATP = a 2'-deoxyribonucleoside 5'-triphosphate + ADP. It carries out the reaction a ribonucleoside 5'-diphosphate + ATP = a ribonucleoside 5'-triphosphate + ADP. In terms of biological role, major role in the synthesis of nucleoside triphosphates other than ATP. The ATP gamma phosphate is transferred to the NDP beta phosphate via a ping-pong mechanism, using a phosphorylated active-site intermediate. This is Nucleoside diphosphate kinase from Bradyrhizobium sp. (strain BTAi1 / ATCC BAA-1182).